Here is a 1058-residue protein sequence, read N- to C-terminus: Carbamoyl phosphate synthase large chain (1058 aa).

The interval 1–399 (MPIDKDIKKV…AIQKAIRSLD (399 aa)) is carboxyphosphate synthetic domain. The ATP site is built by arginine 127, arginine 167, glycine 173, glycine 174, glutamate 206, valine 208, glutamate 213, glycine 239, isoleucine 240, histidine 241, glutamine 282, and glutamate 296. The ATP-grasp 1 domain occupies 131-325 (GHFMDKLNEP…IAKISSKIAL (195 aa)). Mg(2+) is bound by residues glutamine 282, glutamate 296, and asparagine 298. The Mn(2+) site is built by glutamine 282, glutamate 296, and asparagine 298. Positions 400–538 (MGHDGFEYVE…YSTYDSGNEL (139 aa)) are oligomerization domain. Residues 539–924 (KSSNKKKIVI…YKSQLAAGMD (386 aa)) are carbamoyl phosphate synthetic domain. One can recognise an ATP-grasp 2 domain in the interval 663 to 856 (AKLLNKLHIH…LAKVATWIMT (194 aa)). The ATP site is built by arginine 699, lysine 738, leucine 740, glutamate 745, glycine 770, valine 771, histidine 772, serine 773, glutamine 813, and glutamate 827. 3 residues coordinate Mg(2+): glutamine 813, glutamate 827, and asparagine 829. Positions 813, 827, and 829 each coordinate Mn(2+). One can recognise an MGS-like domain in the interval 923–1058 (MDLPKEGKIF…KSLNEHIDGE (136 aa)). An allosteric domain region spans residues 925–1058 (LPKEGKIFIS…KSLNEHIDGE (134 aa)).

It belongs to the CarB family. As to quaternary structure, composed of two chains; the small (or glutamine) chain promotes the hydrolysis of glutamine to ammonia, which is used by the large (or ammonia) chain to synthesize carbamoyl phosphate. Tetramer of heterodimers (alpha,beta)4. Mg(2+) is required as a cofactor. The cofactor is Mn(2+).

The catalysed reaction is hydrogencarbonate + L-glutamine + 2 ATP + H2O = carbamoyl phosphate + L-glutamate + 2 ADP + phosphate + 2 H(+). It catalyses the reaction hydrogencarbonate + NH4(+) + 2 ATP = carbamoyl phosphate + 2 ADP + phosphate + 2 H(+). Its pathway is amino-acid biosynthesis; L-arginine biosynthesis; carbamoyl phosphate from bicarbonate: step 1/1. It functions in the pathway pyrimidine metabolism; UMP biosynthesis via de novo pathway; (S)-dihydroorotate from bicarbonate: step 1/3. Large subunit of the glutamine-dependent carbamoyl phosphate synthetase (CPSase). CPSase catalyzes the formation of carbamoyl phosphate from the ammonia moiety of glutamine, carbonate, and phosphate donated by ATP, constituting the first step of 2 biosynthetic pathways, one leading to arginine and/or urea and the other to pyrimidine nucleotides. The large subunit (synthetase) binds the substrates ammonia (free or transferred from glutamine from the small subunit), hydrogencarbonate and ATP and carries out an ATP-coupled ligase reaction, activating hydrogencarbonate by forming carboxy phosphate which reacts with ammonia to form carbamoyl phosphate. The sequence is that of Carbamoyl phosphate synthase large chain from Methanobrevibacter smithii (strain ATCC 35061 / DSM 861 / OCM 144 / PS).